A 167-amino-acid chain; its full sequence is Centrin-3 (167 aa).

4 EF-hand domains span residues glutamate 25–aspartate 60, valine 61–glutamate 96, aspartate 98–asparagine 133, and methionine 134–isoleucine 167. Residue serine 135 is modified to Phosphoserine. Residues aspartate 147, aspartate 149, aspartate 151, glutamate 153, and glutamate 158 each contribute to the Ca(2+) site.

Belongs to the centrin family. Monomer. Component of the nuclear pore complex (NPC)-associated TREX-2 complex (transcription and export complex 2), composed of at least GANP, 2 copies of ENY2, PCID2, SEM1/DSS1, and either centrin CETN2 or centrin CETN3. The TREX-2 complex also associates with ALYREF/ALY and with the nucleoporin NUP153. Interacts with USP49.

The protein resides in the cytoplasm. Its subcellular location is the cytoskeleton. It localises to the microtubule organizing center. The protein localises to the centrosome. It is found in the nucleus. The protein resides in the nucleolus. Its subcellular location is the nucleus envelope. It localises to the nuclear pore complex. The protein localises to the centriole. Plays a fundamental role in microtubule-organizing center structure and function. Functionally, as a component of the TREX-2 complex, involved in the export of mRNAs to the cytoplasm through the nuclear pores. This Homo sapiens (Human) protein is Centrin-3 (CETN3).